The following is a 54-amino-acid chain: UPF0391 membrane protein Mfla_0947/Mfla_1091 (54 aa).

The next 2 membrane-spanning stretches (helical) occupy residues valine 6–glycine 26 and isoleucine 30–isoleucine 50.

Belongs to the UPF0391 family.

It is found in the cell membrane. The protein is UPF0391 membrane protein Mfla_0947/Mfla_1091 of Methylobacillus flagellatus (strain ATCC 51484 / DSM 6875 / VKM B-1610 / KT).